The chain runs to 174 residues: ATP synthase subunit delta (174 aa).

This sequence belongs to the ATPase delta chain family. In terms of assembly, F-type ATPases have 2 components, F(1) - the catalytic core - and F(0) - the membrane proton channel. F(1) has five subunits: alpha(3), beta(3), gamma(1), delta(1), epsilon(1). F(0) has three main subunits: a(1), b(2) and c(10-14). The alpha and beta chains form an alternating ring which encloses part of the gamma chain. F(1) is attached to F(0) by a central stalk formed by the gamma and epsilon chains, while a peripheral stalk is formed by the delta and b chains.

It localises to the cell inner membrane. Its function is as follows. F(1)F(0) ATP synthase produces ATP from ADP in the presence of a proton or sodium gradient. F-type ATPases consist of two structural domains, F(1) containing the extramembraneous catalytic core and F(0) containing the membrane proton channel, linked together by a central stalk and a peripheral stalk. During catalysis, ATP synthesis in the catalytic domain of F(1) is coupled via a rotary mechanism of the central stalk subunits to proton translocation. Functionally, this protein is part of the stalk that links CF(0) to CF(1). It either transmits conformational changes from CF(0) to CF(1) or is implicated in proton conduction. This Francisella tularensis subsp. tularensis (strain FSC 198) protein is ATP synthase subunit delta.